The chain runs to 664 residues: Macoilin (664 aa).

Transmembrane regions (helical) follow at residues 28–48 (TFLYLKFLVVWALVLLADFVL), 75–95 (AFSVFFVCVAFTSNIICLLFI), 120–140 (VCLPTVSLWILFVYIEAAIRF), and 154–174 (FAAHCIGYPVVTLGFGFKSYV). The span at 252 to 265 (YREKGKEKDKDAKK) shows a compositional bias: basic and acidic residues. The interval 252 to 274 (YREKGKEKDKDAKKHNLGINNNN) is disordered. Residue Ser305 is modified to Phosphoserine. Residues 320 to 348 (KNYKNASGVVNSSPRSHSATNGSIPSSSS) show a composition bias toward polar residues. Residues 320–375 (KNYKNASGVVNSSPRSHSATNGSIPSSSSKNEKKQRCTSKGPSAHKDLMENCIPNN) are disordered. N-linked (GlcNAc...) asparagine glycosylation is present at Asn324. Position 332 is a phosphoserine (Ser332). N-linked (GlcNAc...) asparagine glycans are attached at residues Asn340 and Asn452. Positions 630–664 (TSPLSPVSPHYSSKFVETSPSGLDPNASVYQPLKK) are disordered. 2 positions are modified to phosphoserine: Ser631 and Ser634. Residue Asn655 is glycosylated (N-linked (GlcNAc...) asparagine).

Belongs to the macoilin family.

It is found in the rough endoplasmic reticulum membrane. Its subcellular location is the nucleus membrane. Its function is as follows. Plays a role in the regulation of neuronal activity. In Rattus norvegicus (Rat), this protein is Macoilin.